A 1101-amino-acid chain; its full sequence is Protein diaphanous homolog 2 (1101 aa).

Position 1 is an N-acetylmethionine (Met1). The tract at residues 1–44 (MEQPGAAASGAGGGSEEPGGGRSNKRSAGNRAANEEETKNKPKL) is disordered. Gly residues predominate over residues 10-22 (GAGGGSEEPGGGR). The GBD/FH3 domain occupies 98–464 (SLNLSEKEVL…QIVLHCSGMD (367 aa)). 2 coiled-coil regions span residues 366–418 (KEKE…MLKD) and 487–547 (KAKV…SSSG). Positions 536 to 546 (RTQAQVLSSSS) are enriched in polar residues. 3 disordered regions span residues 536-594 (RTQA…PPPP), 1010-1048 (NKRR…DINK), and 1070-1101 (RDRR…ISSK). Residues 549–594 (PGPPAAPPLPGVGPPPPPPAPPLPGGAPLPPPPPPLPGMMGIPPPP) are compositionally biased toward pro residues. The FH1 domain maps to 549 to 623 (PGPPAAPPLP…PPPGISLNLP (75 aa)). In terms of domain architecture, FH2 spans 628–1028 (QKKMYKPEVS…TRRAKLAKEK (401 aa)). Positions 903 to 1053 (SASKVSAQIL…IDINKEGDET (151 aa)) form a coiled coil. Composition is skewed to basic and acidic residues over residues 1010–1035 (NKRR…EKLE) and 1078–1090 (RNPD…LERS). In terms of domain architecture, DAD spans 1051–1081 (DETGVMDNLLEALQSGAAFRDRRKRIPRNPD).

The protein belongs to the formin homology family. Diaphanous subfamily. Isoform 3 interacts with RHOD in the GTP-bound form. Expressed in testis, ovary, small intestine, prostate, lung, liver, kidney and leukocytes.

It localises to the cytoplasm. It is found in the cytosol. The protein localises to the early endosome. Could be involved in oogenesis. Involved in the regulation of endosome dynamics. Implicated in a novel signal transduction pathway, in which isoform 3 and CSK are sequentially activated by RHOD to regulate the motility of early endosomes through interactions with the actin cytoskeleton. The chain is Protein diaphanous homolog 2 (DIAPH2) from Homo sapiens (Human).